We begin with the raw amino-acid sequence, 78 residues long: MYPHHSYLRGIPGPAGYPARSPFLFGAPLVGGLLGGFLGSALFNYSRPYAYPPGPYGYGGGPYGFGAGVPYGGYPGFY.

The chain crosses the membrane as a helical span at residues 21–43 (SPFLFGAPLVGGLLGGFLGSALF).

Its subcellular location is the membrane. This is an uncharacterized protein from Bacillus subtilis (strain 168).